The primary structure comprises 464 residues: E3 ubiquitin-protein ligase ITT1 (464 aa).

Positions 176–455 (SNYHCCICME…EAYSGCYGRL (280 aa)) are TRIAD supradomain. 10 residues coordinate Zn(2+): C180, C183, C207, C210, C290, C300, C316, C319, C402, and C405. The RING-type 1 zinc-finger motif lies at 180 to 236 (CCICMEMEKGVRMIKLPCENANVEHYLCRGCAKSYFTAMIQENRISSVRCPQCEYKE). Residues 267–338 (DTELCERYEK…HAWHGYNNKC (72 aa)) form an IBR-type zinc finger. Residues 402 to 431 (CPKCKVVVERSEGCNKMKCEVCGTLFCFIC) form an RING-type 2; atypical zinc finger. The active site involves C415. C420, C423, C428, C431, H443, and C451 together coordinate Zn(2+).

This sequence belongs to the RBR family. RNF14 subfamily. Interacts with translation release factors eRF1 (SUP45) and eRF3 (SUP35) in vitro.

It carries out the reaction [E2 ubiquitin-conjugating enzyme]-S-ubiquitinyl-L-cysteine + [acceptor protein]-L-lysine = [E2 ubiquitin-conjugating enzyme]-L-cysteine + [acceptor protein]-N(6)-ubiquitinyl-L-lysine.. It functions in the pathway protein modification; protein ubiquitination. Its function is as follows. E3 ubiquitin-protein ligase involved in translation quality control. Involved in the rescue of stalled ribosomes by promoting ubiquitination and degradation of proteins on stalled ribosomes. Specifically required to resolve RNA-protein cross-links caused by reactive aldehydes, which trigger translation stress by stalling ribosomes: acts by catalying 'Lys-6'-linked ubiquitination of RNA-protein cross-links, leading to their degradation. Interacts with the translation termination factors eRF1 (SUP45) and eRF3 (SUP35); overexpression decreases the efficiency of translation termination. This chain is E3 ubiquitin-protein ligase ITT1, found in Saccharomyces cerevisiae (strain ATCC 204508 / S288c) (Baker's yeast).